The sequence spans 612 residues: MSAELIAVYKDEQIIDLESAKVLGLSDGIKALNGTEPIYFDDSPLALEVIRHSCAHLLAQSLKALYPDAKFFVGPVVEEGFYYDFKTASKISEEDLPKIEAKMKEFAKSKLAITKETLTREQALERFKGDELKHAVMSKISGDIFGVYKQGEFEDLCKGPHLPNTRFLNHFKLTKLAGAYLGGDENNEMLIRIYGIAFATKEGLKDYLFQIEEAKKRDHRKLGVELGLFSFDDEIGAGLPLWLPKGARLRKRIEDLLSQALLLRGYEPVKGPEILKSDVWKISGHYDNYKENMYFTTIDEQEYGIKPMNCVGHIKVYQSALHSYRDLPLRFYEYGVVHRHEKSGVLHGLLRVREFTQDDAHIFCSFEQIQSEVSAILDFTHKIMQAFDFSYEMELSTRPAKSIGDDEVWEKATNALKEALKEHRIDYKIDEGGGAFYGPKIDIKITDALRRKWQCGTIQVDMNLPERFKLAFTNERNHAEQPVMIHRAILGSFERFIAILSEHFGGNFPFFVAPTQIALIPINEEHHVFALKLKEELKKRDIFVEVLDKNDSLNKKVRLAEKQKIPMILVLGNEEVETEILSIRDREKQAQYKMPLKEFLNMVESKMQEVSF.

Residues 218–509 are catalytic; that stretch reads DHRKLGVELG…LSEHFGGNFP (292 aa). Zn(2+)-binding residues include Cys310, His361, and His486.

This sequence belongs to the class-II aminoacyl-tRNA synthetase family. As to quaternary structure, homodimer. It depends on Zn(2+) as a cofactor.

It localises to the cytoplasm. It catalyses the reaction tRNA(Thr) + L-threonine + ATP = L-threonyl-tRNA(Thr) + AMP + diphosphate + H(+). Its function is as follows. Catalyzes the attachment of threonine to tRNA(Thr) in a two-step reaction: L-threonine is first activated by ATP to form Thr-AMP and then transferred to the acceptor end of tRNA(Thr). Also edits incorrectly charged L-seryl-tRNA(Thr). In Helicobacter pylori (strain HPAG1), this protein is Threonine--tRNA ligase.